A 251-amino-acid chain; its full sequence is HTH-type transcriptional regulator UlaR (251 aa).

An HTH deoR-type domain is found at 3 to 58 (EAQRHQILLEMLAQLGFVTVEKVVERLGISPATARRDINKLDESGKLKKVRNGAEA). The segment at residues 20–39 (VTVEKVVERLGISPATARRD) is a DNA-binding region (H-T-H motif).

It localises to the cytoplasm. Its function is as follows. Represses ulaG and the ulaABCDEF operon. In Escherichia coli O139:H28 (strain E24377A / ETEC), this protein is HTH-type transcriptional regulator UlaR.